A 35-amino-acid chain; its full sequence is Photosystem II reaction center protein T (35 aa).

A helical transmembrane segment spans residues 3 to 23; that stretch reads ALVYTFLLVSTLGIIFFAIFF.

This sequence belongs to the PsbT family. As to quaternary structure, PSII is composed of 1 copy each of membrane proteins PsbA, PsbB, PsbC, PsbD, PsbE, PsbF, PsbH, PsbI, PsbJ, PsbK, PsbL, PsbM, PsbT, PsbY, PsbZ, Psb30/Ycf12, at least 3 peripheral proteins of the oxygen-evolving complex and a large number of cofactors. It forms dimeric complexes.

The protein resides in the plastid. The protein localises to the chloroplast thylakoid membrane. Functionally, found at the monomer-monomer interface of the photosystem II (PS II) dimer, plays a role in assembly and dimerization of PSII. PSII is a light-driven water plastoquinone oxidoreductase, using light energy to abstract electrons from H(2)O, generating a proton gradient subsequently used for ATP formation. The sequence is that of Photosystem II reaction center protein T from Cedrus deodara (Deodar cedar).